Consider the following 513-residue polypeptide: ATP synthase subunit alpha (513 aa).

169 to 176 (GDRQCGKT) contacts ATP.

The protein belongs to the ATPase alpha/beta chains family. F-type ATPases have 2 components, CF(1) - the catalytic core - and CF(0) - the membrane proton channel. CF(1) has five subunits: alpha(3), beta(3), gamma(1), delta(1), epsilon(1). CF(0) has three main subunits: a(1), b(2) and c(9-12). The alpha and beta chains form an alternating ring which encloses part of the gamma chain. CF(1) is attached to CF(0) by a central stalk formed by the gamma and epsilon chains, while a peripheral stalk is formed by the delta and b chains.

The protein localises to the cell inner membrane. The catalysed reaction is ATP + H2O + 4 H(+)(in) = ADP + phosphate + 5 H(+)(out). Produces ATP from ADP in the presence of a proton gradient across the membrane. The alpha chain is a regulatory subunit. The sequence is that of ATP synthase subunit alpha from Burkholderia vietnamiensis (strain G4 / LMG 22486) (Burkholderia cepacia (strain R1808)).